A 94-amino-acid polypeptide reads, in one-letter code: Large ribosomal subunit protein uL29 (94 aa).

The tract at residues 66–94 (NPGERKSRVLSRAKRKKKNLARLSAKVKG) is disordered. Basic residues predominate over residues 73 to 94 (RVLSRAKRKKKNLARLSAKVKG).

The protein belongs to the universal ribosomal protein uL29 family.

In Leptospira borgpetersenii serovar Hardjo-bovis (strain JB197), this protein is Large ribosomal subunit protein uL29.